The sequence spans 222 residues: UPF0173 metal-dependent hydrolase Nther_2337 (222 aa).

This sequence belongs to the UPF0173 family.

The protein is UPF0173 metal-dependent hydrolase Nther_2337 of Natranaerobius thermophilus (strain ATCC BAA-1301 / DSM 18059 / JW/NM-WN-LF).